The chain runs to 223 residues: Protein FAM3D (223 aa).

Residues 1-25 (MRVAGLIRVVVFIFTIVTMWVFLRS) form the signal peptide. 2 disulfides stabilise this stretch: Cys-54/Cys-82 and Cys-60/Cys-217. Positions 62–221 (NNFFAFKISS…LELEGCVPRK (160 aa)) constitute a GG-type lectin domain. A glycan (N-linked (GlcNAc...) asparagine) is linked at Asn-106.

It belongs to the FAM3 family.

It localises to the secreted. This chain is Protein FAM3D, found in Mus musculus (Mouse).